The following is a 249-amino-acid chain: uncharacterized protein (249 aa).

Positions 1–43 (MRRGRSRPAGAAPAALLLPLLLLLPLTGCDRLAAAPAEHAAAA) are cleaved as a signal peptide. The tract at residues 40–59 (AAAAGDPAQDADRGRRLPPV) is disordered. The 176-residue stretch at 68-243 (PVVFLTYDDG…TIEEQGLRVG (176 aa)) folds into the NodB homology domain.

This is an uncharacterized protein from Streptomyces coelicolor (strain ATCC BAA-471 / A3(2) / M145).